The chain runs to 392 residues: ATP phosphoribosyltransferase regulatory subunit (392 aa).

The protein belongs to the class-II aminoacyl-tRNA synthetase family. HisZ subfamily. In terms of assembly, heteromultimer composed of HisG and HisZ subunits.

Its subcellular location is the cytoplasm. The protein operates within amino-acid biosynthesis; L-histidine biosynthesis; L-histidine from 5-phospho-alpha-D-ribose 1-diphosphate: step 1/9. In terms of biological role, required for the first step of histidine biosynthesis. May allow the feedback regulation of ATP phosphoribosyltransferase activity by histidine. This Prochlorococcus marinus (strain MIT 9303) protein is ATP phosphoribosyltransferase regulatory subunit.